Consider the following 227-residue polypeptide: Nucleoside triphosphate pyrophosphatase (227 aa).

Asp77 functions as the Proton acceptor in the catalytic mechanism.

Belongs to the Maf family. The cofactor is a divalent metal cation.

It is found in the cytoplasm. The enzyme catalyses a ribonucleoside 5'-triphosphate + H2O = a ribonucleoside 5'-phosphate + diphosphate + H(+). It catalyses the reaction a 2'-deoxyribonucleoside 5'-triphosphate + H2O = a 2'-deoxyribonucleoside 5'-phosphate + diphosphate + H(+). In terms of biological role, nucleoside triphosphate pyrophosphatase. May have a dual role in cell division arrest and in preventing the incorporation of modified nucleotides into cellular nucleic acids. The sequence is that of Nucleoside triphosphate pyrophosphatase from Rickettsia typhi (strain ATCC VR-144 / Wilmington).